Consider the following 396-residue polypeptide: Probable sugar efflux transporter (396 aa).

A run of 12 helical transmembrane segments spans residues 15-35, 50-70, 81-101, 103-123, 136-156, 170-190, 209-229, 246-266, 275-295, 299-319, 333-353, and 364-384; these read VVTL…PVGL, VGIM…PFML, LICL…SWSF, VLVI…SITA, AQAL…GLPL, FFAI…LLPL, PALM…YTAY, FATA…VIFG, ALVS…LPAA, IHLG…GLGM, VAMA…ALVG, and MIGY…IIIF.

The protein belongs to the major facilitator superfamily. SotB (TC 2.A.1.2) family.

It is found in the cell inner membrane. In terms of biological role, involved in the efflux of sugars. The physiological role may be the reduction of the intracellular concentration of toxic sugars or sugar metabolites. This is Probable sugar efflux transporter from Escherichia coli O139:H28 (strain E24377A / ETEC).